The chain runs to 152 residues: Probable methionine-R-sulfoxide reductase B (152 aa).

A MsrB domain is found at 27–151 (QTEWKSVLPN…NSVCMAFEKK (125 aa)). Cysteine 66, cysteine 69, cysteine 116, and cysteine 119 together coordinate Zn(2+). The active-site Nucleophile is cysteine 140.

The protein belongs to the MsrB Met sulfoxide reductase family. It depends on Zn(2+) as a cofactor.

The enzyme catalyses L-methionyl-[protein] + [thioredoxin]-disulfide + H2O = L-methionyl-(R)-S-oxide-[protein] + [thioredoxin]-dithiol. In terms of biological role, methionine-sulfoxide reductase that specifically reduces methionine (R)-sulfoxide back to methionine. While in many cases, methionine oxidation is the result of random oxidation following oxidative stress, methionine oxidation is also a post-translational modification that takes place on specific residue. The chain is Probable methionine-R-sulfoxide reductase B from Caenorhabditis elegans.